Reading from the N-terminus, the 567-residue chain is 2-succinyl-5-enolpyruvyl-6-hydroxy-3-cyclohexene-1-carboxylate synthase (567 aa).

Belongs to the TPP enzyme family. MenD subfamily. As to quaternary structure, homodimer. It depends on Mg(2+) as a cofactor. Requires Mn(2+) as cofactor. The cofactor is thiamine diphosphate.

The enzyme catalyses isochorismate + 2-oxoglutarate + H(+) = 5-enolpyruvoyl-6-hydroxy-2-succinyl-cyclohex-3-ene-1-carboxylate + CO2. It functions in the pathway quinol/quinone metabolism; 1,4-dihydroxy-2-naphthoate biosynthesis; 1,4-dihydroxy-2-naphthoate from chorismate: step 2/7. It participates in quinol/quinone metabolism; menaquinone biosynthesis. Functionally, catalyzes the thiamine diphosphate-dependent decarboxylation of 2-oxoglutarate and the subsequent addition of the resulting succinic semialdehyde-thiamine pyrophosphate anion to isochorismate to yield 2-succinyl-5-enolpyruvyl-6-hydroxy-3-cyclohexene-1-carboxylate (SEPHCHC). This chain is 2-succinyl-5-enolpyruvyl-6-hydroxy-3-cyclohexene-1-carboxylate synthase, found in Shewanella loihica (strain ATCC BAA-1088 / PV-4).